The following is a 353-amino-acid chain: Quinolinate synthase (353 aa).

Residues His47 and Ser68 each coordinate iminosuccinate. A [4Fe-4S] cluster-binding site is contributed by Cys113. Iminosuccinate contacts are provided by residues 139–141 and Ser156; that span reads YAN. Cys200 provides a ligand contact to [4Fe-4S] cluster. Iminosuccinate contacts are provided by residues 226 to 228 and Thr243; that span reads HPE. A [4Fe-4S] cluster-binding site is contributed by Cys297.

It belongs to the quinolinate synthase family. Type 1 subfamily. [4Fe-4S] cluster is required as a cofactor.

It is found in the cytoplasm. The catalysed reaction is iminosuccinate + dihydroxyacetone phosphate = quinolinate + phosphate + 2 H2O + H(+). It participates in cofactor biosynthesis; NAD(+) biosynthesis; quinolinate from iminoaspartate: step 1/1. In terms of biological role, catalyzes the condensation of iminoaspartate with dihydroxyacetone phosphate to form quinolinate. This is Quinolinate synthase from Pectobacterium atrosepticum (strain SCRI 1043 / ATCC BAA-672) (Erwinia carotovora subsp. atroseptica).